Consider the following 117-residue polypeptide: Appetite-regulating hormone (117 aa).

A signal peptide spans Met1–Ala23. The O-decanoyl serine; alternate moiety is linked to residue Ser26. The O-hexanoyl serine; alternate moiety is linked to residue Ser26. Residue Ser26 is the site of O-octanoyl serine; alternate attachment. A disordered region spans residues Ser29–Gly67. Residues Glu31–Lys43 show a composition bias toward basic and acidic residues. The propeptide at Ala52 to Gln75 is removed in mature form. Leucine amide is present on Leu98. A propeptide spans Gly99 to Lys117 (removed in mature form).

This sequence belongs to the motilin family. Post-translationally, O-octanoylated by GOAT/MBOAT4. O-octanoylation is essential for ghrelin activity. In terms of processing, amidation of Leu-98 is essential for obestatin activity.

Its subcellular location is the secreted. In terms of biological role, ghrelin is the ligand for growth hormone secretagogue receptor type 1 (GHSR). Induces the release of growth hormone from the pituitary. Has an appetite-stimulating effect, induces adiposity and stimulates gastric acid secretion. Involved in growth regulation. Its function is as follows. Obestatin may be the ligand for GPR39. May have an appetite-reducing effect resulting in decreased food intake. May reduce gastric emptying activity and jejunal motility. In Papio hamadryas (Hamadryas baboon), this protein is Appetite-regulating hormone (GHRL).